Here is a 169-residue protein sequence, read N- to C-terminus: HTH-type transcriptional regulator PchR (169 aa).

The HTH marR-type domain occupies 10–153 (YDIYVRLLHL…VLKFLEQLTS (144 aa)). Residues 64–87 (NAGIARKMNLSKANVTKISTKLIK) constitute a DNA-binding region (H-T-H motif).

Homodimer.

Its function is as follows. Represses the expression of the yvmC-cypX operon, which is involved in pulcherriminic acid biosynthesis. Also negatively regulates yvmA, yvnB and its own expression. Positively regulates yisI expression. Acts by binding specifically to a 14-bp palindromic motif, the YvmB box, which is present in the promoter region of the target genes. This Bacillus subtilis (strain 168) protein is HTH-type transcriptional regulator PchR.